The following is a 1273-amino-acid chain: DNA-directed RNA polymerase subunit beta (1273 aa).

Belongs to the RNA polymerase beta chain family. In terms of assembly, the RNAP catalytic core consists of 2 alpha, 1 beta, 1 beta' and 1 omega subunit. When a sigma factor is associated with the core the holoenzyme is formed, which can initiate transcription.

It catalyses the reaction RNA(n) + a ribonucleoside 5'-triphosphate = RNA(n+1) + diphosphate. Functionally, DNA-dependent RNA polymerase catalyzes the transcription of DNA into RNA using the four ribonucleoside triphosphates as substrates. This Phytoplasma mali (strain AT) protein is DNA-directed RNA polymerase subunit beta.